A 287-amino-acid chain; its full sequence is 4-hydroxybenzoate octaprenyltransferase (287 aa).

9 consecutive transmembrane segments (helical) span residues valine 21–alanine 41, phenylalanine 44–valine 64, valine 91–leucine 111, leucine 112–phenylalanine 132, leucine 139–threonine 159, valine 160–valine 180, leucine 211–leucine 231, tyrosine 235–isoleucine 255, and cysteine 263–leucine 283.

Belongs to the UbiA prenyltransferase family. Mg(2+) serves as cofactor.

The protein localises to the cell inner membrane. It catalyses the reaction all-trans-octaprenyl diphosphate + 4-hydroxybenzoate = 4-hydroxy-3-(all-trans-octaprenyl)benzoate + diphosphate. Its pathway is cofactor biosynthesis; ubiquinone biosynthesis. Catalyzes the prenylation of para-hydroxybenzoate (PHB) with an all-trans polyprenyl group. Mediates the second step in the final reaction sequence of ubiquinone-8 (UQ-8) biosynthesis, which is the condensation of the polyisoprenoid side chain with PHB, generating the first membrane-bound Q intermediate 3-octaprenyl-4-hydroxybenzoate. The polypeptide is 4-hydroxybenzoate octaprenyltransferase (Coxiella burnetii (strain CbuG_Q212) (Coxiella burnetii (strain Q212))).